The primary structure comprises 225 residues: uncharacterized protein (225 aa).

A helical membrane pass occupies residues 2-22 (TIFYLVFIAVIIIIILYVLYL). N-linked (GlcNAc...) asparagine; by host glycosylation is present at Asn73. Positions 114–146 (DYEDNYFNSNWNLKQLKNQLENLLREKNYKMVL) form a coiled coil. Residue Asn222 is glycosylated (N-linked (GlcNAc...) asparagine; by host).

The protein resides in the membrane. This is an uncharacterized protein from Acanthamoeba polyphaga (Amoeba).